We begin with the raw amino-acid sequence, 2170 residues long: Brefeldin A-inhibited guanine nucleotide-exchange protein 3 (2170 aa).

Serine 471 is modified (phosphoserine). 2 disordered regions span residues 489–547 and 613–634; these read EHTP…MGKV and AAEK…CSLA. Positions 503–524 are enriched in polar residues; the sequence is ISISVTTDTGQTTLEGELGQTT. An SEC7 domain is found at 579-792; sequence RTRSYGSRYS…EELYHQVLDR (214 aa). Positions 614 to 623 are enriched in basic and acidic residues; sequence AEKDSGRSDV. Residues serine 628, serine 632, and serine 1045 each carry the phosphoserine modification. Residues 1488–1508 form a helical membrane-spanning segment; it reads PGFGIYAVVHLLLPVMSLWLL. Residues 1843–1872 form a disordered region; it reads SSDSSQQCSSEDEDIFEETAQVSPPRGKEK. Serine 1881 is subject to Phosphoserine. Over residues 1938 to 1955 the composition is skewed to polar residues; the sequence is FQSESSTPSTGGFSGKNT. 2 disordered regions span residues 1938–1997 and 2024–2058; these read FQSE…RKKE and KRRQ…PLLQ. Basic and acidic residues predominate over residues 1956 to 1966; sequence PSEDDRREHLS. A phosphoserine mark is found at serine 1975 and serine 1984. Composition is skewed to basic and acidic residues over residues 1986–1997 and 2036–2045; these read KTEKKDPGRKKE and KEVKVDKKGE. Phosphoserine is present on residues serine 2072, serine 2074, serine 2088, serine 2094, and serine 2096. The interval 2078-2097 is disordered; it reads ELLRQEKRPRSGSTGSSLSV. Over residues 2088 to 2097 the composition is skewed to low complexity; that stretch reads SGSTGSSLSV.

Interacts with PHB2. Expressed in pancreatic islet (insulin granules of islet alpha and beta cells) and brain (at protein level).

The protein localises to the cytoplasmic vesicle. Its subcellular location is the secretory vesicle. The protein resides in the secretory vesicle membrane. Participates in the regulation of systemic glucose homeostasis, where it negatively regulates insulin granule biogenesis in pancreatic islet beta cells. Also regulates glucagon granule production in pancreatic alpha cells. Inhibits nuclear translocation of the transcriptional coregulator PHB2 and may enhance estrogen receptor alpha (ESR1) transcriptional activity in breast cancer cells. In Mus musculus (Mouse), this protein is Brefeldin A-inhibited guanine nucleotide-exchange protein 3.